A 1295-amino-acid polypeptide reads, in one-letter code: Phosphoribosylformylglycinamidine synthase (1295 aa).

The interval 305–327 (WPGAATGSGGEIRDEGATGRGAK) is disordered. ATP contacts are provided by residues 307–318 (GAATGSGGEIRD), 386–388 (TGY), and Ala-678. Asp-679, Glu-718, Asn-722, and Asp-884 together coordinate Mg(2+). Position 886 (Ser-886) interacts with ATP. Residues 1042-1295 (VAVLREQGVN…IFRNARKQLG (254 aa)) form the Glutamine amidotransferase type-1 domain. The Nucleophile role is filled by Cys-1135. Residues His-1260 and Glu-1262 contribute to the active site.

It in the N-terminal section; belongs to the FGAMS family. In terms of assembly, monomer.

Its subcellular location is the cytoplasm. The catalysed reaction is N(2)-formyl-N(1)-(5-phospho-beta-D-ribosyl)glycinamide + L-glutamine + ATP + H2O = 2-formamido-N(1)-(5-O-phospho-beta-D-ribosyl)acetamidine + L-glutamate + ADP + phosphate + H(+). It functions in the pathway purine metabolism; IMP biosynthesis via de novo pathway; 5-amino-1-(5-phospho-D-ribosyl)imidazole from N(2)-formyl-N(1)-(5-phospho-D-ribosyl)glycinamide: step 1/2. Phosphoribosylformylglycinamidine synthase involved in the purines biosynthetic pathway. Catalyzes the ATP-dependent conversion of formylglycinamide ribonucleotide (FGAR) and glutamine to yield formylglycinamidine ribonucleotide (FGAM) and glutamate. This Salmonella paratyphi A (strain ATCC 9150 / SARB42) protein is Phosphoribosylformylglycinamidine synthase.